Consider the following 357-residue polypeptide: Cyclic AMP-responsive element-binding protein 5 (357 aa).

Positions 114–239 (RQDQTPHHHL…FLERNRAAAT (126 aa)) are disordered. Composition is skewed to basic residues over residues 120–129 (HHHLHSHPHQ) and 138–175 (PYPH…HPAH). The segment covering 186–195 (TGNQAQVSPA) has biased composition (polar residues). Low complexity predominate over residues 196–206 (TQQMQPTQTIQ). The span at 218-235 (VVDEDPDERRRKFLERNR) shows a compositional bias: basic and acidic residues. A bZIP domain is found at 224 to 287 (DERRRKFLER…AQLKQLLLTH (64 aa)). A basic motif region spans residues 226–246 (RRRKFLERNRAAATRCRQKRK). Residues 252–280 (LEKKAEELTQTNMQLQNEVSMLKNEVAQL) form a leucine-zipper region. A disordered region spans residues 298-318 (ESQGYLSPESSPPASPVPACS).

Belongs to the bZIP family. As to quaternary structure, binds DNA as a homodimer or as a heterodimer with JUN or ATF2/CREBP1.

The protein resides in the nucleus. In terms of biological role, binds to the cAMP response element and activates transcription. In Mus musculus (Mouse), this protein is Cyclic AMP-responsive element-binding protein 5 (Creb5).